The following is a 566-amino-acid chain: NXPE family member 3 (566 aa).

The N-terminal stretch at 1–32 (MEKYFPKYVPFFSLLALSGLLYLLWSITSLES) is a signal peptide. Asn-64, Asn-172, Asn-242, Asn-303, and Asn-344 each carry an N-linked (GlcNAc...) asparagine glycan.

Belongs to the NXPE family.

The protein localises to the secreted. This chain is NXPE family member 3 (nxpe3), found in Danio rerio (Zebrafish).